Consider the following 550-residue polypeptide: Chaperonin GroEL (550 aa).

ATP is bound by residues threonine 30 to proline 33, lysine 51, aspartate 87 to threonine 91, glycine 416, asparagine 480 to alanine 482, and aspartate 496. The tract at residues leucine 525–methionine 550 is disordered. Positions glycine 534 to methionine 550 are enriched in gly residues.

The protein belongs to the chaperonin (HSP60) family. As to quaternary structure, forms a cylinder of 14 subunits composed of two heptameric rings stacked back-to-back. Interacts with the co-chaperonin GroES.

The protein localises to the cytoplasm. The catalysed reaction is ATP + H2O + a folded polypeptide = ADP + phosphate + an unfolded polypeptide.. In terms of biological role, together with its co-chaperonin GroES, plays an essential role in assisting protein folding. The GroEL-GroES system forms a nano-cage that allows encapsulation of the non-native substrate proteins and provides a physical environment optimized to promote and accelerate protein folding. The polypeptide is Chaperonin GroEL (Halorhodospira halophila (strain DSM 244 / SL1) (Ectothiorhodospira halophila (strain DSM 244 / SL1))).